The following is a 260-amino-acid chain: Diphthine synthase (260 aa).

S-adenosyl-L-methionine-binding positions include Leu-9, Asp-85, Ile-88, Thr-113–Ala-114, Leu-168, Ala-208, and His-233.

This sequence belongs to the diphthine synthase family. Homodimer.

The enzyme catalyses 2-[(3S)-amino-3-carboxypropyl]-L-histidyl-[translation elongation factor 2] + 3 S-adenosyl-L-methionine = diphthine-[translation elongation factor 2] + 3 S-adenosyl-L-homocysteine + 3 H(+). Its pathway is protein modification; peptidyl-diphthamide biosynthesis. Functionally, S-adenosyl-L-methionine-dependent methyltransferase that catalyzes the trimethylation of the amino group of the modified target histidine residue in translation elongation factor 2 (EF-2), to form an intermediate called diphthine. The three successive methylation reactions represent the second step of diphthamide biosynthesis. The polypeptide is Diphthine synthase (Halobacterium salinarum (strain ATCC 29341 / DSM 671 / R1)).